We begin with the raw amino-acid sequence, 127 residues long: Alpha-hordothionin (127 aa).

The signal sequence occupies residues 1–18 (MVCLLILGLVLEQVQVEG). Disulfide bonds link Cys-21-Cys-57, Cys-22-Cys-49, Cys-30-Cys-47, and Cys-34-Cys-43. A propeptide spans 64-127 (LALVSNSDEP…GDAGLTSLTA (64 aa)) (acidic domain).

It belongs to the plant thionin (TC 1.C.44) family. 4 C-C subfamily.

The protein resides in the secreted. Functionally, thionins are small plant proteins which are toxic to animal cells. They seem to exert their toxic effect at the level of the cell membrane. Their precise function is not known. The chain is Alpha-hordothionin (THI1.1) from Hordeum vulgare (Barley).